A 405-amino-acid polypeptide reads, in one-letter code: MSTSFMKSPRLFFTSESVTEGHPDKICDQVSDAVLDAFLTHDPRARVACETATTTGLIVVIGEVTYEQGYIPIEEIVRKTVKDIGYTDASYGFDADTCGVMVAIHGQSPDIAQGVDRALEVRGDGYVTDEEVATIGAGDQGMMFGFACNETPELMPLPIALAHRIGRRLSRLRKEGVLPYLRPDGKSQVTVEYSYGRPVRVDTVLVSNQHAPDVTQDQIRHDIIHQVIHAVVPPELIDEKTKYFVNPTGRFVIGGPMGDSGLTGRKIIVDTYGGMARHGGGAFSGKDPTKVDRSAAYACRWVAKNVVAAGLADRFEIQVAYAIGVAHPLSISVECFGTNKVSEETILRLINEHFDLRPGAIIRDLRLRRPIYRPTAAYGHFGRDDIDAPWEQTDRAEALRRAAGL.

ATP is bound at residue His-22. Asp-24 contacts Mg(2+). Residue Glu-50 participates in K(+) binding. L-methionine contacts are provided by Glu-63 and Gln-107. Residues 107 to 117 are flexible loop; it reads QSPDIAQGVDR. ATP-binding positions include 184 to 186, 250 to 251, Asp-259, 265 to 266, Ala-282, and Lys-286; these read DGK, RF, and RK. Asp-259 provides a ligand contact to L-methionine. Lys-290 serves as a coordination point for L-methionine.

The protein belongs to the AdoMet synthase family. In terms of assembly, homotetramer; dimer of dimers. Mg(2+) is required as a cofactor. It depends on K(+) as a cofactor.

Its subcellular location is the cytoplasm. It catalyses the reaction L-methionine + ATP + H2O = S-adenosyl-L-methionine + phosphate + diphosphate. The protein operates within amino-acid biosynthesis; S-adenosyl-L-methionine biosynthesis; S-adenosyl-L-methionine from L-methionine: step 1/1. Catalyzes the formation of S-adenosylmethionine (AdoMet) from methionine and ATP. The overall synthetic reaction is composed of two sequential steps, AdoMet formation and the subsequent tripolyphosphate hydrolysis which occurs prior to release of AdoMet from the enzyme. This Roseiflexus sp. (strain RS-1) protein is S-adenosylmethionine synthase.